Reading from the N-terminus, the 615-residue chain is Coagulation factor XII (615 aa).

Residues 1–19 (MRALLLLGFLLVSLESTLS) form the signal peptide. The Fibronectin type-II domain maps to 42–90 (VTGEPCHFPFQYHRQLYHKCTHKGRPGPQPWCATTPNFDQDQRWGYCLE). 13 cysteine pairs are disulfide-bonded: Cys-47-Cys-73, Cys-61-Cys-88, Cys-98-Cys-110, Cys-104-Cys-119, Cys-121-Cys-130, Cys-135-Cys-163, Cys-161-Cys-170, Cys-178-Cys-189, Cys-183-Cys-198, Cys-200-Cys-209, Cys-217-Cys-295, Cys-238-Cys-277, and Cys-266-Cys-290. Residues 94-131 (VKDHCSKHSPCQKGGTCVNMPSGPHCLCPQHLTGNHCQ) form the EGF-like 1 domain. O-linked (Fuc) threonine glycosylation occurs at Thr-109. The 41-residue stretch at 133 to 173 (EKCFEPQLLRFFHKNEIWYRTEQAAVARCQCKGPDAHCQRL) folds into the Fibronectin type-I domain. One can recognise an EGF-like 2 domain in the interval 174 to 210 (ASQACRTNPCLHGGRCLEVEGHRLCHCPVGYTGAFCD). Positions 217–295 (CYDGRGLSYR…SWEYCDLAQC (79 aa)) constitute a Kringle domain. Asn-249 carries N-linked (GlcNAc...) asparagine glycosylation. The segment at 298–359 (PTQAAPPTPV…SLTRNGPLSC (62 aa)) is disordered. Thr-299 and Thr-305 each carry an O-linked (GalNAc...) threonine glycan. Ser-308 carries O-linked (GalNAc...) serine glycosylation. Positions 317-326 (PAQPAPPKPQ) are enriched in pro residues. Low complexity predominate over residues 327-338 (PTTRTPPQSQTP). 3 O-linked (GalNAc...) threonine glycosylation sites follow: Thr-328, Thr-329, and Thr-337. 7 disulfides stabilise this stretch: Cys-359-Cys-486, Cys-397-Cys-413, Cys-405-Cys-475, Cys-436-Cys-439, Cys-500-Cys-569, Cys-532-Cys-548, and Cys-559-Cys-590. One can recognise a Peptidase S1 domain in the interval 373–614 (VVGGLVALRG…YLAWIREHTV (242 aa)). His-412 functions as the Charge relay system in the catalytic mechanism. N-linked (GlcNAc...) asparagine glycosylation is present at Asn-433. The Charge relay system role is filled by Asp-461. Residue Ser-563 is the Charge relay system of the active site.

This sequence belongs to the peptidase S1 family. As to quaternary structure, interacts with HRG; the interaction, which is enhanced in the presence of zinc ions and inhibited by heparin-binding, inhibits factor XII autoactivation and contact-initiated coagulation. Interacts (inactive and activated) with D7L2, an anticoagulant protein from Anopheles gambiae. Interacts (activated) with iripin-8, a serine protease inhibitor from Ixodes ricinus saliva. Interacts (inactive and activated) (via amino acids 1-77) with triafestin-1 and triafestin-2, anticoagulant proteins from Triatoma infestans. Interacts (inactive and activated) (via amino acids 1-77) with short form salivary protein D7R1, an anticoagulant protein from Anopheles stephensi. Interacts (inactive and activated) (via fibronectin type II domain) with haemaphysalin, an anticoagulant protein from Haemaphysalis longicornis. Factor XII is activated by kallikrein in alpha-factor XIIa, which is further converted by trypsin into beta-factor XIIa. Alpha-factor XIIa is composed of an NH2-terminal heavy chain, called coagulation factor XIIa heavy chain, and a COOH-terminal light chain, called coagulation factor XIIa light chain, connected by a disulfide bond. Beta-factor XIIa is composed of 2 chains linked by a disulfide bond, an N-terminal nonapeptide, called beta-factor XIIa part 1, and coagulation factor XIIa light chain, also known in this context as beta-factor XIIa part 2. In terms of processing, O- and N-glycosylated. The O-linked polysaccharides were not identified, but are probably the mucin type linked to GalNAc.

It is found in the secreted. It carries out the reaction Selective cleavage of Arg-|-Ile bonds in factor VII to form factor VIIa and factor XI to form factor XIa.. With respect to regulation, activity is promoted in the presence of negatively charged surfaces. Factor XII is a serum glycoprotein that participates in the initiation of blood coagulation, fibrinolysis, and the generation of bradykinin and angiotensin. Prekallikrein is cleaved by factor XII to form kallikrein, which then cleaves factor XII first to alpha-factor XIIa and then trypsin cleaves it to beta-factor XIIa. Alpha-factor XIIa activates factor XI to factor XIa. The chain is Coagulation factor XII (F12) from Homo sapiens (Human).